The chain runs to 494 residues: Putative transporter SVOPL (494 aa).

10 helical membrane-spanning segments follow: residues 48–68, 86–106, 121–141, 179–199, 203–223, 281–301, 350–370, 385–405, 431–451, and 460–480; these read IALFLIMGSTGVVEAMEIMLI, VAFVTTMVFFGYMVSSILFGL, FLWGAYFSLLTSFSPSYIWFV, VFWLAGSLLIISMASVVIPTI, WLIRIASIPGIILIMAFKFIP, TLQIWIIWLGISFAYYGVILA, IISTLGEIALNPLNILGINFL, LFFLLLNICTSSAGLIGFLFM, AIGMGTSGSLCRIGAMVAPFI, and FLGALCLFSSVCVVCAISAFT.

It belongs to the major facilitator superfamily.

The protein resides in the membrane. This chain is Putative transporter SVOPL (Svopl), found in Mus musculus (Mouse).